Reading from the N-terminus, the 197-residue chain is Imidazoleglycerol-phosphate dehydratase (197 aa).

This sequence belongs to the imidazoleglycerol-phosphate dehydratase family.

The protein localises to the cytoplasm. The enzyme catalyses D-erythro-1-(imidazol-4-yl)glycerol 3-phosphate = 3-(imidazol-4-yl)-2-oxopropyl phosphate + H2O. The protein operates within amino-acid biosynthesis; L-histidine biosynthesis; L-histidine from 5-phospho-alpha-D-ribose 1-diphosphate: step 6/9. The sequence is that of Imidazoleglycerol-phosphate dehydratase from Marinobacter nauticus (strain ATCC 700491 / DSM 11845 / VT8) (Marinobacter aquaeolei).